The following is a 287-amino-acid chain: mRNA-capping enzyme small subunit (287 aa).

Heterodimer of a large and a small subunit.

The protein resides in the virion. The enzyme catalyses a 5'-end (5'-triphosphoguanosine)-ribonucleoside in mRNA + S-adenosyl-L-methionine = a 5'-end (N(7)-methyl 5'-triphosphoguanosine)-ribonucleoside in mRNA + S-adenosyl-L-homocysteine. Functionally, catalyzes the last reaction in the mRNA cap formation pathway. This Sus scrofa (Pig) protein is mRNA-capping enzyme small subunit.